A 463-amino-acid polypeptide reads, in one-letter code: Fumarate hydratase class II (463 aa).

Residues 98–100 (SGT), 129–132 (HPND), 139–141 (SSN), and Thr187 each bind substrate. Catalysis depends on His188, which acts as the Proton donor/acceptor. Ser318 is an active-site residue. Substrate-binding positions include Ser319 and 324 to 326 (KVN).

This sequence belongs to the class-II fumarase/aspartase family. Fumarase subfamily. Homotetramer.

It is found in the cytoplasm. It catalyses the reaction (S)-malate = fumarate + H2O. Its pathway is carbohydrate metabolism; tricarboxylic acid cycle; (S)-malate from fumarate: step 1/1. Its function is as follows. Involved in the TCA cycle. Catalyzes the stereospecific interconversion of fumarate to L-malate. The polypeptide is Fumarate hydratase class II (Rhizobium meliloti (strain 1021) (Ensifer meliloti)).